A 2568-amino-acid polypeptide reads, in one-letter code: MQSAGMHRATAEPIAIVGLSCKFAGEASTPDRLWEMLAAGRSAWSEIPPSRFNLKGAYHPSADRTNTVCFNSLCRGNPTEEKKVHVRGGHFLEQDLGLFDAQFFSFSAETAASMDPQIRLQLESVYEALENAGITLPDVAGSNTAVYAAVFSRDYRDGIIRDEDRLPRFLPTGTGDAMFSNRVSHFFDLRGPSITLDTGCSGGLVALHEGVKSLRTGESDMALISGEGLTDEGRFFSPDGKSYAFDSRANGYGRGEGIATIVIKRLSDAIIAGDPIRAIVRESGLNQDGKTETITTPSEEAQVALMRDCYRRAGLDYADTQYLEAHGTGTSTGDPIECRAIATVFKDSRSSEQPLRIGSVKTNVGHTEAASGLASLIKVVMALEKGKIPPSINFEKPNPKIALDEWNLRVVTTLEDWPAGPGGVRRASINNFGFGGTNAHLIVESQAAQPLPWQADGYGASATNLDSQIFVFSARDKQACVNMVNNLKKYLRQNAATDSPDFLLQRVAYTLGQRRTRFPWVTARPVPVQNGFREAIQALEVNMPVPRRTTGIPRIGMVFTGQGAQWYAMGRELIAAYPVFKASLKETDRHLAALGARWSVIEELNQDIPASRVHDVEYSTPLCVAVQISLVRLLRSWGVKPVAVTSHSSGEIAAAYAVGALGCQDAMAVAYHRALLATRSSLGSKQGAMLVVGMSLEETETYLARIDAQIGIATVACVNSPSSITVSGDQDAVNALEALARNDGIFTHRLKIHTAFHSHHMNPIADLYRSALQGALSPNHDKVESDITFSSPVTGRRITNLSQLSEPDHWVDSLLKPVQFVDAFTDMVLGASGASSANVDLILEVGPHTALGAPIKQILAEPKFAGLDISCLGSLVREVSAVRSMHSLAASLVAEGLPLDLDAVNFPHGRPPSVRALSDLPSYPWNHQTRHWYESRFNKGLRERAQPPHDLLGSLVLGTDPNSPTWRHILKLKDAPWLREHVVQEDILFPGAGFICLAIEAIKMLPELQSKAPQAAAGYRLRDVDLLQGLVIPDNDDGVEIQTSLSEVSDKEMGNRGWKRFEVSSVSADNQWSTHARGLITMEPEDAPDKTITKSRPADLSGYTRRFGPSDLYDMMRERGIYHGPAFQIITDIEQAGNNQRADSSLFIPDTAIPADSPYQTLIHPITLDAAFQTVYAPLLGGKEWDDAIVPRTLGSLWISNSISQAAGHRFKAFAILHHSDARTMRSDIYMADNNSDASPVLMVRNAVFQSVGRSAAPQQVKAQWESEPCTNVVWGPDMSLLSTPMRAQLKQQLSHPPEAEEARLLADLRRACLYFIYDALSSLRPFELRKLPSHHAKYHSWMQVQVSLAAECRLAEDSARWSSDTQEQRQSLIERVGRSSVNGEMVCKLGPHLAAIIRQEKMPLELMMENNMLNHYYQNALKCDRILSQAAHILQNLIHKNPRARILEIGAGTGSFTRYALPKIGTAATGGPLAELYHFTDISPAFFEAAREEFAAWDDIMVFEKLDIEQDPASQGYDMESYDIVVAVQVLHATTSMSKTMSHVRKLMKPGGHLLLVETTHDQLDTEFAFGLLPGWWLSEEPQRALSPSMSVPLWDETLKAAALSGVDFEVRDCESDEWYMMSVITSTAVPAHQLTLNPDSIVFVERKDAPCRQRWLEILRSNFAAAGQSPPVVEFETATAESYKGKWTVFLGEVDKPLLYDLDATGLKNIQTMIKHSRSLLWVTRGGAVKCERPELSLATGFLRSIRHEYAGRRFVTFDLDPHESLWSDTSTADIAKVMTTSFGSAADNAQTPPPYDFEYAVREGVILVPRLFRDSARNQAINPASVCWASPEALPTESFFQSNRTLALKVGVPGLLDTIAFDDDPAALADCTQLPPDLVEIKPRAYGVNFRDVLVAMGQLEERVMGVDCAGVITRVGCQAAAHGYAPGDNVFALVRSGYSSRPRVEWTNAMHIPQGLSFEQAASVPAIFTTVYLCFYKIARLQRGQTVLIHAGAGGVGQTAIQFARHIGAEVYTTVGSAEKRELLIQRYGIPADHIFSSRDASFADGILEATNGRGVDVVLNSLAGPLLQASLNILAPFGHFVEVGKRDIEQNSHLEMRPFSRHITFSSFDLLALSQHDKRSIHSSLIEIRRLLEEGAISPVYPVSTYPLGDIGKVFRLLQVGKHSGKVVLSISPDEQVRVVPQARTAKLRSDASYLLVGGAGGIGRSMAHWLAAHGAKNIIVLSRSAGTSPAVAELVAELQPLGCHVKPISCDASVKADLAAALSSCSAELPPIRGVIQAAMVLQDSVLERMTFEDWQTSLNPKVRASWNVHTQLRDADLDFFVFLSSMSGIYGYTTQSNYSAGNTYEDALAHWRVSQGLPAVSMDLGPVKSVGYVAGVAGVADRMTKLGHFPVTEEQVLRVLETAVLSPFDKQVAMGINQGPGSHWHPVGPSPLGRDARFRSLQYQKSTQRQATNGYSNASTSLASRLSDAKTRQQAEKLVVEAIASKLADIFMIPVAHVDAAKHLSEYGLDSLSAVELRNMLALQAAADVSIFSIMQSESLAALASEVTRKSTHVPASLSVM.

In terms of domain architecture, Ketosynthase family 3 (KS3) spans 11–445 (AEPIAIVGLS…GTNAHLIVES (435 aa)). Residues C200, H326, and H366 each act as for beta-ketoacyl synthase activity in the active site. Positions 558-882 (VFTGQGAQWY…GSLVREVSAV (325 aa)) constitute a Malonyl-CoA:ACP transacylase (MAT) domain. The tract at residues 949 to 1087 (HDLLGSLVLG…GLITMEPEDA (139 aa)) is N-terminal hotdog fold. The PKS/mFAS DH domain maps to 949-1258 (HDLLGSLVLG…FQSVGRSAAP (310 aa)). Catalysis depends on H981, which acts as the Proton acceptor; for dehydratase activity. Residues 1104–1258 (TRRFGPSDLY…FQSVGRSAAP (155 aa)) are C-terminal hotdog fold. The Proton donor; for dehydratase activity role is filled by D1169. The methyltransferase (CMet) domain stretch occupies residues 1311-1620 (RACLYFIYDA…EVRDCESDEW (310 aa)). The Enoyl reductase (ER) domain occupies 1857 to 2174 (GLLDTIAFDD…VGKHSGKVVL (318 aa)). The Ketoreductase (KR) domain maps to 2197-2375 (ASYLLVGGAG…AVSMDLGPVK (179 aa)). In terms of domain architecture, Carrier spans 2481–2558 (QAEKLVVEAI…ALASEVTRKS (78 aa)). An O-(pantetheine 4'-phosphoryl)serine modification is found at S2518.

It depends on pantetheine 4'-phosphate as a cofactor.

Its pathway is secondary metabolite biosynthesis. Its function is as follows. Highly reducing polyketide synthase; part of a cluster that mediates the biosynthesis of a yet undetermined secondary metabolite. With esterase AN6793, produces a pathway intermediate compound with molecular weight 258. This chain is Highly reducing polyketide synthase AN6791, found in Emericella nidulans (strain FGSC A4 / ATCC 38163 / CBS 112.46 / NRRL 194 / M139) (Aspergillus nidulans).